Here is a 261-residue protein sequence, read N- to C-terminus: Mite allergen Eur m 3 (261 aa).

The N-terminal stretch at 1–18 is a signal peptide; it reads MVICNAIIVLLLAFNTLA. Residues 19–29 constitute a propeptide that is removed on maturation; sequence NPILPSSPNAT. A Peptidase S1 domain is found at 30–260; sequence IVGGQKAKAG…FIDWIDSKRS (231 aa). A disulfide bridge connects residues Cys54 and Cys70. Active-site charge relay system residues include His69 and Asp114. Cystine bridges form between Cys181–Cys198 and Cys210–Cys236. Ser214 functions as the Charge relay system in the catalytic mechanism.

The protein belongs to the peptidase S1 family.

The protein localises to the secreted. The protein is Mite allergen Eur m 3 (EURM3) of Euroglyphus maynei (Mayne's house dust mite).